Consider the following 213-residue polypeptide: Ribosomal RNA small subunit methyltransferase G (213 aa).

S-adenosyl-L-methionine is bound by residues Gly72, Phe77, 125 to 126, and Arg141; that span reads IE.

Belongs to the methyltransferase superfamily. RNA methyltransferase RsmG family.

Its subcellular location is the cytoplasm. The enzyme catalyses guanosine(527) in 16S rRNA + S-adenosyl-L-methionine = N(7)-methylguanosine(527) in 16S rRNA + S-adenosyl-L-homocysteine. Its function is as follows. Specifically methylates the N7 position of guanine in position 527 of 16S rRNA. This Rhizobium meliloti (strain 1021) (Ensifer meliloti) protein is Ribosomal RNA small subunit methyltransferase G.